The chain runs to 65 residues: Large ribosomal subunit protein bL35 (65 aa).

This sequence belongs to the bacterial ribosomal protein bL35 family.

This is Large ribosomal subunit protein bL35 from Aromatoleum aromaticum (strain DSM 19018 / LMG 30748 / EbN1) (Azoarcus sp. (strain EbN1)).